The chain runs to 299 residues: Probable lipid kinase YegS (299 aa).

The DAGKc domain maps to 2–133 (ANFPASLLIL…IDMARVNDKT (132 aa)). ATP contacts are provided by residues Thr-40, 66–72 (GDGTINE), and Thr-95. Mg(2+) is bound by residues Leu-215, Asp-218, and Leu-220. Catalysis depends on Glu-271, which acts as the Proton acceptor.

This sequence belongs to the diacylglycerol/lipid kinase family. YegS lipid kinase subfamily. Requires Mg(2+) as cofactor. Ca(2+) serves as cofactor.

It is found in the cytoplasm. In terms of biological role, probably phosphorylates lipids; the in vivo substrate is unknown. In Salmonella gallinarum (strain 287/91 / NCTC 13346), this protein is Probable lipid kinase YegS.